We begin with the raw amino-acid sequence, 117 residues long: Large ribosomal subunit protein bL20 (117 aa).

It belongs to the bacterial ribosomal protein bL20 family.

Functionally, binds directly to 23S ribosomal RNA and is necessary for the in vitro assembly process of the 50S ribosomal subunit. It is not involved in the protein synthesizing functions of that subunit. The polypeptide is Large ribosomal subunit protein bL20 (Vibrio cholerae serotype O1 (strain ATCC 39541 / Classical Ogawa 395 / O395)).